Here is a 245-residue protein sequence, read N- to C-terminus: Adenylate kinase (245 aa).

15–20 (GSGKGT) contributes to the ATP binding site. The tract at residues 35–64 (SSGDLLRGAVSKDTPLSQEIKSYLDQGKLL) is NMP. AMP is bound by residues serine 36, arginine 41, 62-64 (KLL), 103-106 (GFPR), and glutamine 110. The segment at 143-176 (SRYICPACQGIYNEQQGFSSCPKCSVELIRRSDD) is LID. Arginine 144 contributes to the ATP binding site. Residues cysteine 147 and cysteine 150 each contribute to the Zn(2+) site. An ATP-binding site is contributed by 153–154 (IY). Positions 163 and 166 each coordinate Zn(2+). Residues arginine 173 and arginine 184 each contribute to the AMP site. An ATP-binding site is contributed by alanine 212.

The protein belongs to the adenylate kinase family. As to quaternary structure, monomer.

It is found in the cytoplasm. It carries out the reaction AMP + ATP = 2 ADP. It functions in the pathway purine metabolism; AMP biosynthesis via salvage pathway; AMP from ADP: step 1/1. Catalyzes the reversible transfer of the terminal phosphate group between ATP and AMP. Plays an important role in cellular energy homeostasis and in adenine nucleotide metabolism. This Chlamydia trachomatis serovar L2 (strain ATCC VR-902B / DSM 19102 / 434/Bu) protein is Adenylate kinase.